The chain runs to 392 residues: MAFLKLTEQNVQGKTVLIRADMNVPFKDGKISDDTRIRASLASIQYCMDNGASVIVMTHLGRPTEGEFHPEDDVAPVAAHLGGLLGKNVKVLNDWRENKPALNAGDVVMLQNVRINKGEKKNDLELGKAYASLCDVFVNDAFGTAHRAQASTEAVAQAAPVACAGVLMAGELDALGKALKQPARPMVAIVAGSKVSTKLTILESLADKVDQLIVGGGIANTFLLAEGKAIGKSLAEHDLVEESKKIMAKMAAKGGSVPLPTDVVVAKAFTADAEAVVKDIADVAEDDMILDIGPKSAAELADLLKAAGTVVWNGPVGVFEFDQFAGGTKALAEAIAQSKAFSIAGGGDTLAAIAKFGVTDQIGYISTGGGAFLEFLEGKELPAVAALEKRGA.

Substrate is bound by residues 21 to 23 (DMN), Arg36, 59 to 62 (HLGR), Arg114, and Arg147. ATP contacts are provided by residues Lys198, Glu320, and 346-349 (GGDT).

This sequence belongs to the phosphoglycerate kinase family. Monomer.

The protein resides in the cytoplasm. It carries out the reaction (2R)-3-phosphoglycerate + ATP = (2R)-3-phospho-glyceroyl phosphate + ADP. The protein operates within carbohydrate degradation; glycolysis; pyruvate from D-glyceraldehyde 3-phosphate: step 2/5. The polypeptide is Phosphoglycerate kinase (Neisseria meningitidis serogroup C / serotype 2a (strain ATCC 700532 / DSM 15464 / FAM18)).